We begin with the raw amino-acid sequence, 327 residues long: Clavesin-2 (327 aa).

The CRAL-TRIO domain occupies 96–257 (IKQALKDGFP…EFGGMLPPYD (162 aa)). Residues 288-327 (VDKELSPKSMKRSQSVVDPTALKRMDKSEEENMQPLLSLD) form a disordered region. At Ser-325 the chain carries Phosphoserine.

In terms of assembly, forms a complex with clathrin heavy chain and gamma-adaptin. As to expression, expressed in brain with no expression detected in non-neuronal tissues (at protein level).

The protein localises to the golgi apparatus. It is found in the trans-Golgi network membrane. It localises to the early endosome membrane. The protein resides in the cytoplasmic vesicle. Its subcellular location is the clathrin-coated vesicle. Functionally, required for normal morphology of late endosomes and/or lysosomes in neurons. Binds phosphatidylinositol 3,5-bisphosphate (PtdIns(3,5)P2). The sequence is that of Clavesin-2 from Rattus norvegicus (Rat).